A 209-amino-acid chain; its full sequence is Orotate phosphoribosyltransferase (209 aa).

Residues Arg-96, Lys-100, His-102, and 122-130 (EDLISTGGS) each bind 5-phospho-alpha-D-ribose 1-diphosphate. An orotate-binding site is contributed by Ser-126.

This sequence belongs to the purine/pyrimidine phosphoribosyltransferase family. PyrE subfamily. As to quaternary structure, homodimer. Requires Mg(2+) as cofactor.

It carries out the reaction orotidine 5'-phosphate + diphosphate = orotate + 5-phospho-alpha-D-ribose 1-diphosphate. It functions in the pathway pyrimidine metabolism; UMP biosynthesis via de novo pathway; UMP from orotate: step 1/2. Catalyzes the transfer of a ribosyl phosphate group from 5-phosphoribose 1-diphosphate to orotate, leading to the formation of orotidine monophosphate (OMP). This is Orotate phosphoribosyltransferase from Streptococcus gordonii (strain Challis / ATCC 35105 / BCRC 15272 / CH1 / DL1 / V288).